A 375-amino-acid polypeptide reads, in one-letter code: 4,4'-diaponeurosporenoate glycosyltransferase (375 aa).

4 consecutive transmembrane segments (helical) span residues 3–23, 164–184, 277–297, and 330–350; these read WLSRILTVIVAMSMACGALIF, FYEGFSAIFNLMTVVGMNVFS, IMAAIVLWLFGSIASILGLCL, and FSNLLMVCHPLLFMFFTKIFI.

It belongs to the glycosyltransferase 2 family. CrtQ subfamily.

It localises to the cell membrane. It participates in carotenoid biosynthesis; staphyloxanthin biosynthesis; staphyloxanthin from farnesyl diphosphate: step 4/5. Its function is as follows. Catalyzes the glycosylation of 4,4'-diaponeurosporenoate, i.e. the esterification of glucose at the C1'' position with the carboxyl group of 4,4'-diaponeurosporenic acid, to form glycosyl-4,4'-diaponeurosporenoate. This is a step in the biosynthesis of staphyloxanthin, an orange pigment present in most staphylococci strains. The sequence is that of 4,4'-diaponeurosporenoate glycosyltransferase (crtQ) from Staphylococcus aureus (strain bovine RF122 / ET3-1).